Here is a 464-residue protein sequence, read N- to C-terminus: tRNA modification GTPase MnmE (464 aa).

Residues R25, E87, and K130 each contribute to the (6S)-5-formyl-5,6,7,8-tetrahydrofolate site. In terms of domain architecture, TrmE-type G spans 226 to 386; that stretch reads GLSVVLAGQP…LRAELLRIAG (161 aa). Position 236 (N236) interacts with K(+). GTP is bound by residues 236–241, 255–261, and 280–283; these read NVGKSS, TPIAGTT, and DTAG. S240 lines the Mg(2+) pocket. Residues T255, I257, and T260 each coordinate K(+). T261 is a binding site for Mg(2+). K464 provides a ligand contact to (6S)-5-formyl-5,6,7,8-tetrahydrofolate.

It belongs to the TRAFAC class TrmE-Era-EngA-EngB-Septin-like GTPase superfamily. TrmE GTPase family. As to quaternary structure, homodimer. Heterotetramer of two MnmE and two MnmG subunits. Requires K(+) as cofactor.

Its subcellular location is the cytoplasm. Exhibits a very high intrinsic GTPase hydrolysis rate. Involved in the addition of a carboxymethylaminomethyl (cmnm) group at the wobble position (U34) of certain tRNAs, forming tRNA-cmnm(5)s(2)U34. The sequence is that of tRNA modification GTPase MnmE from Burkholderia orbicola (strain MC0-3).